Reading from the N-terminus, the 464-residue chain is Clusterin-like protein 1 (464 aa).

The first 20 residues, 1–20 (MQPPLFVISVYLLWLKYCDS), serve as a signal peptide directing secretion. Residues 56 to 109 (IKQMKIMMERREEEHAKLMKALKKCKEEKQEAQKLMNEVQERLEEEEKLCQASS) adopt a coiled-coil conformation. 5 disulfides stabilise this stretch: Cys-105/Cys-331, Cys-116/Cys-323, Cys-119/Cys-320, Cys-124/Cys-313, and Cys-131/Cys-303. N-linked (GlcNAc...) asparagine glycosylation is found at Asn-195, Asn-255, Asn-309, Asn-349, Asn-398, and Asn-429.

The protein belongs to the clusterin family.

It is found in the secreted. This chain is Clusterin-like protein 1, found in Rattus norvegicus (Rat).